A 586-amino-acid polypeptide reads, in one-letter code: Phosphomethylpyrimidine synthase (586 aa).

Disordered stretches follow at residues 38–59 and 92–114; these read IELS…TSGP and GREI…VFPQ. Positions 92–102 are enriched in basic and acidic residues; that stretch reads GREIKPEDDGV. Substrate-binding positions include Asn193, Met222, Tyr251, His287, 307–309, 348–351, and Glu387; these read SRG and DGLR. His391 serves as a coordination point for Zn(2+). Substrate is bound at residue Tyr414. His455 lines the Zn(2+) pocket. The [4Fe-4S] cluster site is built by Cys535, Cys538, and Cys543.

It belongs to the ThiC family. The cofactor is [4Fe-4S] cluster.

It catalyses the reaction 5-amino-1-(5-phospho-beta-D-ribosyl)imidazole + S-adenosyl-L-methionine = 4-amino-2-methyl-5-(phosphooxymethyl)pyrimidine + CO + 5'-deoxyadenosine + formate + L-methionine + 3 H(+). Its pathway is cofactor biosynthesis; thiamine diphosphate biosynthesis. Catalyzes the synthesis of the hydroxymethylpyrimidine phosphate (HMP-P) moiety of thiamine from aminoimidazole ribotide (AIR) in a radical S-adenosyl-L-methionine (SAM)-dependent reaction. This Bacillus cytotoxicus (strain DSM 22905 / CIP 110041 / 391-98 / NVH 391-98) protein is Phosphomethylpyrimidine synthase.